Here is an 89-residue protein sequence, read N- to C-terminus: Heat shock protein 30A (89 aa).

Composition is skewed to basic and acidic residues over residues 1 to 11 and 19 to 39; these read MRNNVERRMQR and LSKD…RESE. Residues 1 to 55 form a disordered region; it reads MRNNVERRMQRVNEACRLLSKDTEMRRITDQNRQSRESEGTSPNSGKDGKDHFEL. The 55-residue stretch at 35-89 folds into the sHSP domain; it reads SRESEGTSPNSGKDGKDHFELTLNVRDFSPHELTVKTQGRRVIVTGKHERKSDTE.

It belongs to the small heat shock protein (HSP20) family.

The protein is Heat shock protein 30A (hsp30a) of Xenopus laevis (African clawed frog).